The chain runs to 262 residues: Ribosomal RNA small subunit methyltransferase A (262 aa).

Residues H11, I13, G38, E60, D85, and N105 each coordinate S-adenosyl-L-methionine.

It belongs to the class I-like SAM-binding methyltransferase superfamily. rRNA adenine N(6)-methyltransferase family. RsmA subfamily.

The protein resides in the cytoplasm. It catalyses the reaction adenosine(1518)/adenosine(1519) in 16S rRNA + 4 S-adenosyl-L-methionine = N(6)-dimethyladenosine(1518)/N(6)-dimethyladenosine(1519) in 16S rRNA + 4 S-adenosyl-L-homocysteine + 4 H(+). Specifically dimethylates two adjacent adenosines (A1518 and A1519) in the loop of a conserved hairpin near the 3'-end of 16S rRNA in the 30S particle. May play a critical role in biogenesis of 30S subunits. The protein is Ribosomal RNA small subunit methyltransferase A of Neorickettsia sennetsu (strain ATCC VR-367 / Miyayama) (Ehrlichia sennetsu).